The primary structure comprises 444 residues: Phosphoglucosamine mutase (444 aa).

The active-site Phosphoserine intermediate is serine 102. Positions 102, 241, 243, and 245 each coordinate Mg(2+). Residue serine 102 is modified to Phosphoserine.

This sequence belongs to the phosphohexose mutase family. The cofactor is Mg(2+). Post-translationally, activated by phosphorylation.

It carries out the reaction alpha-D-glucosamine 1-phosphate = D-glucosamine 6-phosphate. Catalyzes the conversion of glucosamine-6-phosphate to glucosamine-1-phosphate. In Mannheimia succiniciproducens (strain KCTC 0769BP / MBEL55E), this protein is Phosphoglucosamine mutase.